The sequence spans 599 residues: Fumarate reductase flavoprotein subunit (599 aa).

Residues 12–16, 36–38, 44–52, 156–158, and aspartate 212 each bind FAD; these read GAGGG, VSK, THTVAAEGG, and HFV. Position 45 is a tele-8alpha-FAD histidine (histidine 45). Active-site residues include histidine 233 and arginine 249. FAD-binding positions include 357–358, glutamate 381, and 392–398; these read HY and RLGSNSL.

It belongs to the FAD-dependent oxidoreductase 2 family. FRD/SDH subfamily. As to quaternary structure, part of an enzyme complex containing four subunits: a flavoprotein (FrdA), an iron-sulfur protein (FrdB), and two hydrophobic anchor proteins (FrdC and FrdD). It depends on FAD as a cofactor.

The protein resides in the cell inner membrane. The enzyme catalyses a quinone + succinate = fumarate + a quinol. It carries out the reaction a menaquinone + succinate = a menaquinol + fumarate. This Haemophilus influenzae (strain ATCC 51907 / DSM 11121 / KW20 / Rd) protein is Fumarate reductase flavoprotein subunit (frdA).